The following is a 195-amino-acid chain: Anthranilate synthase component 2 (195 aa).

One can recognise a Glutamine amidotransferase type-1 domain in the interval leucine 3–valine 195. Glycine 54–glycine 56 is an L-glutamine binding site. The active-site Nucleophile; for GATase activity is cysteine 84. L-glutamine is bound by residues glutamine 88 and serine 137–leucine 138. Residues histidine 175 and glutamate 177 each act as for GATase activity in the active site.

Heterotetramer consisting of two non-identical subunits: a beta subunit (TrpG) and a large alpha subunit (TrpE).

The enzyme catalyses chorismate + L-glutamine = anthranilate + pyruvate + L-glutamate + H(+). The protein operates within amino-acid biosynthesis; L-tryptophan biosynthesis; L-tryptophan from chorismate: step 1/5. Functionally, part of a heterotetrameric complex that catalyzes the two-step biosynthesis of anthranilate, an intermediate in the biosynthesis of L-tryptophan. In the first step, the glutamine-binding beta subunit (TrpG) of anthranilate synthase (AS) provides the glutamine amidotransferase activity which generates ammonia as a substrate that, along with chorismate, is used in the second step, catalyzed by the large alpha subunit of AS (TrpE) to produce anthranilate. In the absence of TrpG, TrpE can synthesize anthranilate directly from chorismate and high concentrations of ammonia. The protein is Anthranilate synthase component 2 (trpG) of Saccharolobus solfataricus (strain ATCC 35092 / DSM 1617 / JCM 11322 / P2) (Sulfolobus solfataricus).